Reading from the N-terminus, the 364-residue chain is Abhydrolase domain-containing protein C57A10.08c (364 aa).

Topologically, residues methionine 1 to arginine 8 are cytoplasmic. Residues leucine 9–leucine 29 form a helical; Signal-anchor for type II membrane protein membrane-spanning segment. Residues tyrosine 30 to isoleucine 364 are Lumenal-facing. Serine 183 acts as the Charge relay system in catalysis. Residue asparagine 326 is glycosylated (N-linked (GlcNAc...) asparagine). The Charge relay system role is filled by histidine 336.

The protein belongs to the AB hydrolase superfamily.

Its subcellular location is the endoplasmic reticulum membrane. This chain is Abhydrolase domain-containing protein C57A10.08c, found in Schizosaccharomyces pombe (strain 972 / ATCC 24843) (Fission yeast).